The primary structure comprises 79 residues: Antimicrobial peptide ToAP2 (79 aa).

Positions 1 to 23 are cleaved as a signal peptide; the sequence is MQFKKQLLVIFFAYFLVVNESEA. A propeptide spanning residues 50–79 is cleaved from the precursor; that stretch reads SLMKRELKNLYDPYQRSVEMERLLKELPLY.

It belongs to the non-disulfide-bridged peptide (NDBP) superfamily. Medium-length antimicrobial peptide (group 3) family. As to expression, expressed by the venom gland.

The protein localises to the secreted. It is found in the target cell membrane. Antimicrobial peptide. Shows antibacterial activity against all M.massiliense bacterial strains tested. Has antifungal activity against Candida spp. and two Cryptococcus neoformans strains with MICs values ranging from 6.25 to 200 uM. Also shows an inhibitory activity on C.albicans biofilms at high concentrations. Exhibits chemotactic activity for monocytes, neutrophils, and eosinophils. Shows low cytotoxic activity and has weak hemolytic activity on human erythrocytes. In vivo, treatment of infected mice with M.massiliense reduces the bacterial load in the liver, lung, and spleen. May act by disrupting the integrity of the bacterial cell membrane. This is Antimicrobial peptide ToAP2 from Tityus obscurus (Amazonian scorpion).